We begin with the raw amino-acid sequence, 217 residues long: Pyridoxine/pyridoxamine 5'-phosphate oxidase (217 aa).

Residues 66-71, 81-82, Arg-87, Lys-88, and Gln-110 contribute to the FMN site; these read RMVLLK and FT. Lys-71 contributes to the substrate binding site. 3 residues coordinate substrate: Tyr-128, Arg-132, and Ser-136. Residues 145 to 146 and Trp-190 each bind FMN; that span reads QS. Substrate is bound at residue 196–198; it reads RLH. Position 200 (Arg-200) interacts with FMN.

The protein belongs to the pyridoxamine 5'-phosphate oxidase family. As to quaternary structure, homodimer. FMN is required as a cofactor.

It catalyses the reaction pyridoxamine 5'-phosphate + O2 + H2O = pyridoxal 5'-phosphate + H2O2 + NH4(+). It carries out the reaction pyridoxine 5'-phosphate + O2 = pyridoxal 5'-phosphate + H2O2. It functions in the pathway cofactor metabolism; pyridoxal 5'-phosphate salvage; pyridoxal 5'-phosphate from pyridoxamine 5'-phosphate: step 1/1. Its pathway is cofactor metabolism; pyridoxal 5'-phosphate salvage; pyridoxal 5'-phosphate from pyridoxine 5'-phosphate: step 1/1. Catalyzes the oxidation of either pyridoxine 5'-phosphate (PNP) or pyridoxamine 5'-phosphate (PMP) into pyridoxal 5'-phosphate (PLP). This chain is Pyridoxine/pyridoxamine 5'-phosphate oxidase, found in Psychromonas ingrahamii (strain DSM 17664 / CCUG 51855 / 37).